Reading from the N-terminus, the 124-residue chain is Fluoride-specific ion channel FluC (124 aa).

A run of 4 helical transmembrane segments spans residues 4-24, 35-55, 60-80, and 102-122; these read LLLV…ISIF, FGTL…YALG, ISPE…TTFS, and VVLN…LVFS. Residues glycine 74 and threonine 77 each contribute to the Na(+) site.

It belongs to the fluoride channel Fluc/FEX (TC 1.A.43) family.

It localises to the cell inner membrane. It catalyses the reaction fluoride(in) = fluoride(out). With respect to regulation, na(+) is not transported, but it plays an essential structural role and its presence is essential for fluoride channel function. Functionally, fluoride-specific ion channel. Important for reducing fluoride concentration in the cell, thus reducing its toxicity. The chain is Fluoride-specific ion channel FluC from Shewanella sp. (strain ANA-3).